We begin with the raw amino-acid sequence, 402 residues long: Multidrug resistance protein MdtH (402 aa).

Helical transmembrane passes span 13-33, 45-65, 99-116, 139-159, 165-185, 214-234, 244-264, 277-297, 300-322, 340-360, and 368-388; these read YFLL…FPLI, ALMV…LGIF, PWLL…GTLF, LLMM…SWLL, LVCA…AWLL, VLTL…LPIM, AVKW…YPIA, LMAG…VGNL, LFTL…ETLS, LGLA…FDMG, and LPWM…GWQF.

It belongs to the major facilitator superfamily. DHA1 family. MdtH (TC 2.A.1.2.21) subfamily.

It localises to the cell inner membrane. In Citrobacter koseri (strain ATCC BAA-895 / CDC 4225-83 / SGSC4696), this protein is Multidrug resistance protein MdtH.